A 2715-amino-acid polypeptide reads, in one-letter code: Cilia- and flagella-associated protein 46 (2715 aa).

TPR repeat units lie at residues 89–122, 175–208, 261–295, 324–359, 426–459, 469–503, 807–845, 936–969, 1111–1144, and 1174–1211; these read CRAQ…AKGE, AELM…IKSH, GDIS…LLFE, PGKL…AQLD, CQVH…DSLG, STRL…TPKD, SRKF…TNGS, LQTL…GIKY, AALY…LPRT, and AESE…LQKP. Positions 1356-1412 are disordered; sequence SHLLLPKKEKENERSKEKEKERSKEKENERSKEKDKEKGKEEKVKEPKQSQSPAPIK. Residues 1361 to 1403 are compositionally biased toward basic and acidic residues; sequence PKKEKENERSKEKEKERSKEKENERSKEKDKEKGKEEKVKEPK. Positions 1362–1401 form a coiled coil; sequence KKEKENERSKEKEKERSKEKENERSKEKDKEKGKEEKVKE. The TPR 11 repeat unit spans residues 1639 to 1672; that stretch reads AQCLLLLAQLANKEKNYGQAKKMIAQAQHLGGSE. Residues 1781–1810 adopt a coiled-coil conformation; sequence VDVKLERAKIKRLRAQNEKDEEQKTAYYLE. 3 disordered regions span residues 2000–2023, 2294–2319, and 2371–2399; these read EEEG…EHCR, AVVA…HSTV, and ETEG…KGSI. Basic and acidic residues-rich tracts occupy residues 2300–2311 and 2371–2383; these read GKSKGKDKERKT and ETEG…GRSR. Residues 2384 to 2398 are compositionally biased toward basic residues; it reads DPKKRSLAKKGRKGS. 2 TPR repeats span residues 2399–2432 and 2504–2537; these read IPRT…EMLT and VAVL…EANW. The tract at residues 2541–2567 is disordered; sequence ASPSEDEWRRGGEPRRGFSDLEGQAAA. Basic and acidic residues predominate over residues 2546–2559; sequence DEWRRGGEPRRGFS.

This sequence belongs to the CFAP46 family.

Its subcellular location is the cytoplasm. The protein resides in the cytoskeleton. It is found in the cilium axoneme. In terms of biological role, as part of the central apparatus of the cilium axoneme plays a role in cilium movement. This chain is Cilia- and flagella-associated protein 46, found in Homo sapiens (Human).